A 297-amino-acid chain; its full sequence is N-acetylmuramic acid 6-phosphate etherase (297 aa).

Positions 55–218 (AAAALKAGGR…STGAMVKLGK (164 aa)) constitute an SIS domain. Catalysis depends on glutamate 83, which acts as the Proton donor. Glutamate 114 is a catalytic residue.

The protein belongs to the GCKR-like family. MurNAc-6-P etherase subfamily. As to quaternary structure, homodimer.

It catalyses the reaction N-acetyl-D-muramate 6-phosphate + H2O = N-acetyl-D-glucosamine 6-phosphate + (R)-lactate. Its pathway is amino-sugar metabolism; 1,6-anhydro-N-acetylmuramate degradation. The protein operates within amino-sugar metabolism; N-acetylmuramate degradation. It functions in the pathway cell wall biogenesis; peptidoglycan recycling. Functionally, specifically catalyzes the cleavage of the D-lactyl ether substituent of MurNAc 6-phosphate, producing GlcNAc 6-phosphate and D-lactate. Together with AnmK, is also required for the utilization of anhydro-N-acetylmuramic acid (anhMurNAc) either imported from the medium or derived from its own cell wall murein, and thus plays a role in cell wall recycling. This Serratia proteamaculans (strain 568) protein is N-acetylmuramic acid 6-phosphate etherase.